Reading from the N-terminus, the 314-residue chain is tRNA pseudouridine synthase B (314 aa).

Residue His43 coordinates substrate. The Nucleophile role is filled by Asp48. Residues Tyr76, Tyr179, and Leu200 each contribute to the substrate site.

It belongs to the pseudouridine synthase TruB family. Type 1 subfamily.

It catalyses the reaction uridine(55) in tRNA = pseudouridine(55) in tRNA. Responsible for synthesis of pseudouridine from uracil-55 in the psi GC loop of transfer RNAs. This is tRNA pseudouridine synthase B from Escherichia coli O157:H7.